Reading from the N-terminus, the 249-residue chain is Sulfate transporter CysZ (249 aa).

4 helical membrane passes run 26 to 46 (LFVLLPLAINLVLFVGLIYFA), 71 to 91 (VIWPLFVVLVAFMVFFSFTML), 150 to 170 (LFILSLIPVVNLIAAPLWLLF), and 206 to 226 (LGFGGIVYLALLIPLVNILMM).

Belongs to the CysZ family.

It localises to the cell inner membrane. In terms of biological role, high affinity, high specificity proton-dependent sulfate transporter, which mediates sulfate uptake. Provides the sulfur source for the cysteine synthesis pathway. The polypeptide is Sulfate transporter CysZ (Pseudomonas fluorescens (strain ATCC BAA-477 / NRRL B-23932 / Pf-5)).